Consider the following 660-residue polypeptide: Histone deacetylase 5 (660 aa).

Alanine 2 carries the N-acetylalanine modification. Positions 26-349 (KVGLIYDETM…SLACVQVLLE (324 aa)) are histone deacetylase. The active-site Proton donor/acceptor is the histidine 158. Zn(2+) is bound by residues aspartate 198, histidine 200, and aspartate 291.

It belongs to the histone deacetylase family. HD type 2 subfamily. In terms of assembly, interacts with HDA6. It depends on Zn(2+) as a cofactor. As to expression, expressed in stems, leaves, flowers, siliques and mature seeds.

It localises to the nucleus. The protein localises to the cytoplasm. The catalysed reaction is N(6)-acetyl-L-lysyl-[histone] + H2O = L-lysyl-[histone] + acetate. Inhibited by trichostatin A (TSA), a well-known histone deacetylase inhibitor. Responsible for the deacetylation of lysine residues on the N-terminal part of the core histones (H2A, H2B, H3 and H4). Histone deacetylation gives a tag for epigenetic repression and plays an important role in transcriptional regulation, cell cycle progression and developmental events. Histone deacetylases act via the formation of large multiprotein complexes. Involved in the regulation of flowering time by repressing FLC and AGL27/MAF1 expression. Forms a histone deacetylase complex with HDA6, FLD and MSI4/FVE that represses FLC gene expression to control flowering time. Unlike its tandem duplication HDA18, HDA5 does not seem to be required for the cellular patterning in the root epidermis. In Arabidopsis thaliana (Mouse-ear cress), this protein is Histone deacetylase 5.